Here is a 586-residue protein sequence, read N- to C-terminus: 2-succinyl-5-enolpyruvyl-6-hydroxy-3-cyclohexene-1-carboxylate synthase (586 aa).

The protein belongs to the TPP enzyme family. MenD subfamily. Homodimer. Requires Mg(2+) as cofactor. It depends on Mn(2+) as a cofactor. Thiamine diphosphate is required as a cofactor.

It carries out the reaction isochorismate + 2-oxoglutarate + H(+) = 5-enolpyruvoyl-6-hydroxy-2-succinyl-cyclohex-3-ene-1-carboxylate + CO2. The protein operates within quinol/quinone metabolism; 1,4-dihydroxy-2-naphthoate biosynthesis; 1,4-dihydroxy-2-naphthoate from chorismate: step 2/7. Its pathway is quinol/quinone metabolism; menaquinone biosynthesis. Its function is as follows. Catalyzes the thiamine diphosphate-dependent decarboxylation of 2-oxoglutarate and the subsequent addition of the resulting succinic semialdehyde-thiamine pyrophosphate anion to isochorismate to yield 2-succinyl-5-enolpyruvyl-6-hydroxy-3-cyclohexene-1-carboxylate (SEPHCHC). The protein is 2-succinyl-5-enolpyruvyl-6-hydroxy-3-cyclohexene-1-carboxylate synthase of Natronomonas pharaonis (strain ATCC 35678 / DSM 2160 / CIP 103997 / JCM 8858 / NBRC 14720 / NCIMB 2260 / Gabara) (Halobacterium pharaonis).